We begin with the raw amino-acid sequence, 804 residues long: MSFQHRQIEKKWQDYWEDNKTFKTDTFSNKEKFYALDMFPYPSGQGLHVGHPEGYTATDILARMKRMQGYEVMHPMGWDAFGLPAEQYAIDTGNSPAEFTNQNINTFKRQIKELGFSYDWDREINTTDPNYYKWTQWIFKKLYENDLAYMDEVAVNWCPALGTVLANEEVIDGKSERGGHPVIRKPMKQWMLKITAYADRLLEDLNELDWPDSLKEMQRNWIGRSEGAEVTFSIKGNEGTFTVFTTRPDTLFGATYAVVAPEHPLVKEITTLSQKEAVQNYLDEIQTKSDLERTDLAKDKTGVFTGAYAINPVNGEEMPIWVADYVLMSYGTGAIMAVPAHDERDYEFANTFGLPIKEVVAGGNIDDEAYTGDGEHVNSEFLNGLGKEEAITKMIDWLEANGSGEKKITYRLRDWLFARQRYWGEPIPIIHWEDGTMTAVPDEDLPLTLPQVAEIKPSGTGESPLANNTDWVNVVDPETGLKGRRETNTMPQWAGSCWYFLRYIDPNNTERLADPKALEEWLPIDIYIGGAEHAVLHLLYARFWHKFLFDIGVVSTKEPFQKLYNQGMILGEGNEKMSKSKGNVVNPDDIIDSHGADTLRLYEMFMGPLDASVAWSTNGLDGSRRFLDRVWRLYVGDDGSLTDKIIDDESTELDKIYHETVKKVTDDFEHMHFNTGISQMMVFINECYKANKIPKIYAEGFVKLLSPVAPHLSEEIWQKLGHSESISKATWPAYDESKLVEDEVEVVLQIMGKVRSKIQVPVDISKDDLEKAALDDESMQKWLEGKTIRKVIVVPGKLVNIVAN.

Residues 40–51 (PYPSGQGLHVGH) carry the 'HIGH' region motif. The 'KMSKS' region signature appears at 576 to 580 (KMSKS). ATP is bound at residue K579.

It belongs to the class-I aminoacyl-tRNA synthetase family.

Its subcellular location is the cytoplasm. The catalysed reaction is tRNA(Leu) + L-leucine + ATP = L-leucyl-tRNA(Leu) + AMP + diphosphate. This Oceanobacillus iheyensis (strain DSM 14371 / CIP 107618 / JCM 11309 / KCTC 3954 / HTE831) protein is Leucine--tRNA ligase.